We begin with the raw amino-acid sequence, 300 residues long: Cation-efflux pump FieF (300 aa).

A helical membrane pass occupies residues 24 to 44 (LLIKIFAWWYTGSVSILAALV). Zn(2+) contacts are provided by aspartate 45 and aspartate 49. The next 2 membrane-spanning stretches (helical) occupy residues 82 to 102 (AALAQSMFISGSALFLFLTSI) and 114 to 134 (PGVGIGVTVIALICTIILVTF). Histidine 153 and aspartate 157 together coordinate Zn(2+). 2 helical membrane-spanning segments follow: residues 156–176 (SDVMMNGAILIALGLSWYGWH) and 178–198 (ADALFALGIGIYILYSALRMG).

It belongs to the cation diffusion facilitator (CDF) transporter (TC 2.A.4) family. FieF subfamily. Homodimer.

Its subcellular location is the cell inner membrane. It catalyses the reaction Zn(2+)(in) + H(+)(out) = Zn(2+)(out) + H(+)(in). It carries out the reaction Cd(2+)(in) + H(+)(out) = Cd(2+)(out) + H(+)(in). The catalysed reaction is Fe(2+)(in) + H(+)(out) = Fe(2+)(out) + H(+)(in). Divalent metal cation transporter which exports Zn(2+), Cd(2+) and possibly Fe(2+). May be involved in zinc and iron detoxification by efflux. The chain is Cation-efflux pump FieF from Salmonella schwarzengrund (strain CVM19633).